The sequence spans 120 residues: Large ribosomal subunit protein uL18 (120 aa).

It belongs to the universal ribosomal protein uL18 family. As to quaternary structure, part of the 50S ribosomal subunit; part of the 5S rRNA/L5/L18/L25 subcomplex. Contacts the 5S and 23S rRNAs.

This is one of the proteins that bind and probably mediate the attachment of the 5S RNA into the large ribosomal subunit, where it forms part of the central protuberance. The chain is Large ribosomal subunit protein uL18 from Picosynechococcus sp. (strain ATCC 27264 / PCC 7002 / PR-6) (Agmenellum quadruplicatum).